Reading from the N-terminus, the 3174-residue chain is Probable polyketide synthase 15 (3174 aa).

The Ketosynthase family 3 (KS3) domain occupies 23-474 (NDEIAIVGIG…GSNCCLILSQ (452 aa)). Residues cysteine 194, histidine 342, and histidine 397 each act as for beta-ketoacyl synthase activity in the active site. 2 coiled-coil regions span residues 472–509 (LSQF…QYDN) and 574–604 (EFNK…RVQT). Over residues 578–599 (QKQSQKEKEKEKEREGEEKEQL) the composition is skewed to basic and acidic residues. Positions 578–601 (QKQSQKEKEKEKEREGEEKEQLNR) are disordered. The acyl/malonyl transferase stretch occupies residues 707 to 740 (GIEASFIVGHSLGEIPAAYCSGMITLDTLCYLIY). Residue serine 717 is the For acyl/malonyl transferase activity of the active site. The interval 1034 to 1156 (IDILGLSNYD…ANFQLLNNNN (123 aa)) is N-terminal hotdog fold. A PKS/mFAS DH domain is found at 1034–1332 (IDILGLSNYD…CKSLKIVKNP (299 aa)). Catalysis depends on histidine 1068, which acts as the Proton acceptor; for dehydratase activity. Positions 1182–1332 (NKTKISRIDL…CKSLKIVKNP (151 aa)) are C-terminal hotdog fold. Aspartate 1241 functions as the Proton donor; for dehydratase activity in the catalytic mechanism. Residues 1758 to 1793 (LEININNNNNNNNNNNNNNNNNNNNNNNNNNYEDNV) are a coiled coil. A Carrier domain is found at 2653-2730 (VDSLNIKDIF…LVIKIIITAI (78 aa)). An O-(pantetheine 4'-phosphoryl)serine modification is found at serine 2690.

The cofactor is pantetheine 4'-phosphate.

Its function is as follows. Probable polyketide synthase. This Dictyostelium discoideum (Social amoeba) protein is Probable polyketide synthase 15 (pks15).